The chain runs to 248 residues: 23S rRNA (guanosine-2'-O-)-methyltransferase RlmB (248 aa).

Positions 198, 218, and 227 each coordinate S-adenosyl-L-methionine.

Belongs to the class IV-like SAM-binding methyltransferase superfamily. RNA methyltransferase TrmH family. RlmB subfamily.

It is found in the cytoplasm. The catalysed reaction is guanosine(2251) in 23S rRNA + S-adenosyl-L-methionine = 2'-O-methylguanosine(2251) in 23S rRNA + S-adenosyl-L-homocysteine + H(+). Specifically methylates the ribose of guanosine 2251 in 23S rRNA. The protein is 23S rRNA (guanosine-2'-O-)-methyltransferase RlmB of Pseudomonas aeruginosa (strain ATCC 15692 / DSM 22644 / CIP 104116 / JCM 14847 / LMG 12228 / 1C / PRS 101 / PAO1).